We begin with the raw amino-acid sequence, 253 residues long: DnaJ homolog subfamily C member 8 (253 aa).

The residue at position 2 (alanine 2) is an N-acetylalanine. Position 35 is a phosphoserine (serine 35). Residues 57–124 (NPFEVLQIDP…QKKRALDVIQ (68 aa)) form the J domain. An N6-acetyllysine modification is found at lysine 146. Basic and acidic residues predominate over residues 181 to 222 (EAKEMHERKRQREEEIEAQEKAKREREWQKNFEESRDGRVDS). Residues 181 to 253 (EAKEMHERKR…PPKVKMEQRE (73 aa)) form a disordered region. 2 short sequence motifs (nuclear localization signal) span residues 189–192 (KRQR) and 203–206 (KRER). The residue at position 222 (serine 222) is a Phosphoserine. The span at 231–240 (KGKKEKKNRT) shows a compositional bias: basic residues. Residues 232–253 (GKKEKKNRTFLRPPKVKMEQRE) are essential for polyglutamine aggregation suppression.

As to quaternary structure, interacts with SRPK1. Interacts with HSP70 (HSPA1A or HSPA1B). In terms of tissue distribution, ubiquitous.

The protein localises to the nucleus. Suppresses polyglutamine (polyQ) aggregation of ATXN3 in neuronal cells. This chain is DnaJ homolog subfamily C member 8 (DNAJC8), found in Homo sapiens (Human).